A 495-amino-acid polypeptide reads, in one-letter code: Lanosterol 14-alpha demethylase erg11 (495 aa).

The chain crosses the membrane as a helical span at residues Ala-2 to Ile-22. Cys-442 serves as a coordination point for heme.

This sequence belongs to the cytochrome P450 family. In terms of assembly, interacts with dap1. Heme is required as a cofactor.

The protein localises to the endoplasmic reticulum. It localises to the membrane. The enzyme catalyses a 14alpha-methyl steroid + 3 reduced [NADPH--hemoprotein reductase] + 3 O2 = a Delta(14) steroid + formate + 3 oxidized [NADPH--hemoprotein reductase] + 4 H2O + 4 H(+). It catalyses the reaction a 14alpha-methyl steroid + reduced [NADPH--hemoprotein reductase] + O2 = a 14alpha-hydroxymethyl steroid + oxidized [NADPH--hemoprotein reductase] + H2O + H(+). The catalysed reaction is a 14alpha-hydroxymethyl steroid + reduced [NADPH--hemoprotein reductase] + O2 = a 14alpha-formyl steroid + oxidized [NADPH--hemoprotein reductase] + 2 H2O + H(+). It carries out the reaction a 14alpha-formyl steroid + reduced [NADPH--hemoprotein reductase] + O2 = a Delta(14) steroid + formate + oxidized [NADPH--hemoprotein reductase] + H2O + 2 H(+). The enzyme catalyses lanosterol + 3 reduced [NADPH--hemoprotein reductase] + 3 O2 = 4,4-dimethyl-5alpha-cholesta-8,14,24-trien-3beta-ol + formate + 3 oxidized [NADPH--hemoprotein reductase] + 4 H2O + 4 H(+). It catalyses the reaction lanosterol + reduced [NADPH--hemoprotein reductase] + O2 = 32-hydroxylanosterol + oxidized [NADPH--hemoprotein reductase] + H2O + H(+). The catalysed reaction is 32-hydroxylanosterol + reduced [NADPH--hemoprotein reductase] + O2 = 32-oxolanosterol + oxidized [NADPH--hemoprotein reductase] + 2 H2O + H(+). It carries out the reaction 32-oxolanosterol + reduced [NADPH--hemoprotein reductase] + O2 = 4,4-dimethyl-5alpha-cholesta-8,14,24-trien-3beta-ol + formate + oxidized [NADPH--hemoprotein reductase] + H2O + 2 H(+). The enzyme catalyses eburicol + 3 reduced [NADPH--hemoprotein reductase] + 3 O2 = 14-demethyleburicol + formate + 3 oxidized [NADPH--hemoprotein reductase] + 4 H2O + 4 H(+). It catalyses the reaction eburicol + reduced [NADPH--hemoprotein reductase] + O2 = 32-hydroxyeburicol + oxidized [NADPH--hemoprotein reductase] + H2O + H(+). The catalysed reaction is 32-hydroxyeburicol + reduced [NADPH--hemoprotein reductase] + O2 = 32-oxoeburicol + oxidized [NADPH--hemoprotein reductase] + 2 H2O + H(+). It carries out the reaction 32-oxoeburicol + reduced [NADPH--hemoprotein reductase] + O2 = 14-demethyleburicol + formate + oxidized [NADPH--hemoprotein reductase] + H2O + 2 H(+). The protein operates within steroid biosynthesis; zymosterol biosynthesis; zymosterol from lanosterol: step 1/6. Its pathway is steroid metabolism; ergosterol biosynthesis. Sterol 14alpha-demethylase that plays a critical role in the third module of ergosterol biosynthesis pathway, being ergosterol the major sterol component in fungal membranes that participates in a variety of functions. The third module or late pathway involves the ergosterol synthesis itself through consecutive reactions that mainly occur in the endoplasmic reticulum (ER) membrane. In filamentous fungi, during the initial step of this module, lanosterol (lanosta-8,24-dien-3beta-ol) can be metabolized to eburicol. Sterol 14alpha-demethylase catalyzes the three-step oxidative removal of the 14alpha-methyl group (C-32) of both these sterols in the form of formate, and converts eburicol and lanosterol to 14-demethyleburicol (4,4,24-trimethylergosta-8,14,24(28)-trienol) and 4,4-dimethyl-5alpha-cholesta-8,14,24-trien-3beta-ol, respectively, which are further metabolized by other enzymes in the pathway to ergosterol. Can also use substrates not intrinsic to fungi, such as 24,25-dihydrolanosterol (DHL), producing 4,4-dimethyl-8,14-cholestadien-3-beta-ol, but at lower rates than the endogenous substrates. This chain is Lanosterol 14-alpha demethylase erg11, found in Schizosaccharomyces pombe (strain 972 / ATCC 24843) (Fission yeast).